Reading from the N-terminus, the 344-residue chain is uncharacterized protein (344 aa).

An N-terminal signal peptide occupies residues 1-28 (MNKKSLNIVATLGILLVLAFSGCVDQSA).

Belongs to the bacterial solute-binding protein 1 family. WtpA subfamily.

This is an uncharacterized protein from Methanococcus maripaludis (strain C7 / ATCC BAA-1331).